The sequence spans 762 residues: 5-methyltetrahydropteroyltriglutamate--homocysteine methyltransferase (762 aa).

5-methyltetrahydropteroyltri-L-glutamate contacts are provided by residues 17–20 and lysine 111; that span reads REWK. L-homocysteine is bound by residues 435 to 437 and glutamate 488; that span reads IGS. Residues 435–437 and glutamate 488 contribute to the L-methionine site; that span reads IGS. 5-methyltetrahydropteroyltri-L-glutamate-binding positions include 519–520 and tryptophan 565; that span reads RC. Aspartate 603 serves as a coordination point for L-homocysteine. L-methionine is bound at residue aspartate 603. Glutamate 609 contributes to the 5-methyltetrahydropteroyltri-L-glutamate binding site. Residues histidine 645, cysteine 647, and glutamate 669 each contribute to the Zn(2+) site. Histidine 698 serves as the catalytic Proton donor. Cysteine 730 is a binding site for Zn(2+).

This sequence belongs to the vitamin-B12 independent methionine synthase family. Zn(2+) is required as a cofactor.

The enzyme catalyses 5-methyltetrahydropteroyltri-L-glutamate + L-homocysteine = tetrahydropteroyltri-L-glutamate + L-methionine. The protein operates within amino-acid biosynthesis; L-methionine biosynthesis via de novo pathway; L-methionine from L-homocysteine (MetE route): step 1/1. Catalyzes the transfer of a methyl group from 5-methyltetrahydrofolate to homocysteine resulting in methionine formation. The protein is 5-methyltetrahydropteroyltriglutamate--homocysteine methyltransferase of Bacillus cereus (strain ATCC 14579 / DSM 31 / CCUG 7414 / JCM 2152 / NBRC 15305 / NCIMB 9373 / NCTC 2599 / NRRL B-3711).